The primary structure comprises 179 residues: tRNA (cytidine(56)-2'-O)-methyltransferase (179 aa).

Residues leucine 82, 112 to 116 (GAEKV), and 130 to 137 (VGNQPHSE) each bind S-adenosyl-L-methionine.

It belongs to the aTrm56 family. As to quaternary structure, homodimer.

The protein localises to the cytoplasm. It carries out the reaction cytidine(56) in tRNA + S-adenosyl-L-methionine = 2'-O-methylcytidine(56) in tRNA + S-adenosyl-L-homocysteine + H(+). Functionally, specifically catalyzes the AdoMet-dependent 2'-O-ribose methylation of cytidine at position 56 in tRNAs. The polypeptide is tRNA (cytidine(56)-2'-O)-methyltransferase (Methanococcus maripaludis (strain C6 / ATCC BAA-1332)).